An 88-amino-acid chain; its full sequence is Small ribosomal subunit protein bS20 (88 aa).

Belongs to the bacterial ribosomal protein bS20 family.

Binds directly to 16S ribosomal RNA. This is Small ribosomal subunit protein bS20 from Methylorubrum populi (strain ATCC BAA-705 / NCIMB 13946 / BJ001) (Methylobacterium populi).